The chain runs to 208 residues: Ribosomal RNA small subunit methyltransferase G (208 aa).

Residues Gly-77, Leu-82, 128 to 129 (VE), and Arg-142 contribute to the S-adenosyl-L-methionine site.

This sequence belongs to the methyltransferase superfamily. RNA methyltransferase RsmG family.

It localises to the cytoplasm. The catalysed reaction is guanosine(527) in 16S rRNA + S-adenosyl-L-methionine = N(7)-methylguanosine(527) in 16S rRNA + S-adenosyl-L-homocysteine. In terms of biological role, specifically methylates the N7 position of guanine in position 527 of 16S rRNA. This is Ribosomal RNA small subunit methyltransferase G from Chromohalobacter salexigens (strain ATCC BAA-138 / DSM 3043 / CIP 106854 / NCIMB 13768 / 1H11).